Reading from the N-terminus, the 220-residue chain is Protein DGCR6 (220 aa).

Positions 76 to 142 form a coiled coil; it reads KSLYNQRLRL…EQRAMDQKIV (67 aa).

Belongs to the gonadal family. As to expression, found in all tissues examined with highest expression in liver, heart and skeletal muscle. Lower levels in pancreas and placenta. Weak expression in brain.

The protein localises to the nucleus. Functionally, may play a role in neural crest cell migration into the third and fourth pharyngeal pouches. The sequence is that of Protein DGCR6 (DGCR6) from Homo sapiens (Human).